The following is a 198-amino-acid chain: Recombination protein RecR (198 aa).

The C4-type zinc finger occupies C57–C72. Residues S80 to P175 form the Toprim domain.

Belongs to the RecR family.

May play a role in DNA repair. It seems to be involved in an RecBC-independent recombinational process of DNA repair. It may act with RecF and RecO. The protein is Recombination protein RecR of Brevibacillus brevis (strain 47 / JCM 6285 / NBRC 100599).